The chain runs to 530 residues: Feruloyl esterase C (530 aa).

The N-terminal stretch at 1–25 (MMLTSAILLLTLGVQLSHADDSSRE) is a signal peptide. 6 cysteine pairs are disulfide-bonded: C31-C78, C66-C117, C190-C444, C259-C276, C285-C294, and C506-C528. The active-site Acyl-ester intermediate is S191. Ca(2+) contacts are provided by D260, D263, A265, D267, and V269. Catalysis depends on charge relay system residues D403 and H443.

The protein belongs to the tannase family.

The protein localises to the secreted. It catalyses the reaction feruloyl-polysaccharide + H2O = ferulate + polysaccharide.. Functionally, involved in degradation of plant cell walls. Hydrolyzes the feruloyl-arabinose ester bond in arabinoxylans as well as the feruloyl-galactose and feruloyl-arabinose ester bonds in pectin. Active against methyl esters of sinapate (MSA) and caffeate (MCA). The protein is Feruloyl esterase C (faeC) of Talaromyces stipitatus (strain ATCC 10500 / CBS 375.48 / QM 6759 / NRRL 1006) (Penicillium stipitatum).